The following is a 567-amino-acid chain: Frizzled-7 (567 aa).

An N-terminal signal peptide occupies residues 1–31; that stretch reads MRPAAGEAGAGLRWLGLAALLAALLGTPCAA. The Extracellular segment spans residues 32–250; it reads AHHEDKAISV…EAEVRFARLW (219 aa). The region spanning 42–161 is the FZ domain; the sequence is PDHGFCQPIS…HGAGEICVGQ (120 aa). 5 disulfides stabilise this stretch: Cys-47-Cys-108, Cys-55-Cys-101, Cys-92-Cys-129, Cys-118-Cys-158, and Cys-122-Cys-146. Asn-61 is a glycosylation site (N-linked (GlcNAc...) asparagine). The N-linked (GlcNAc...) asparagine glycan is linked to Asn-162. The helical transmembrane segment at 251–271 threads the bilayer; it reads VGVWSVLCCASTLFTVLTYLV. At 272 to 282 the chain is on the cytoplasmic side; sequence DMRRFSYPERP. The chain crosses the membrane as a helical span at residues 283-303; that stretch reads IIFLSGCYFMVAVAYAAGFLL. The Extracellular segment spans residues 304 to 330; sequence EERVVCLERFSEDGYRTVAQGTKKEGC. The chain crosses the membrane as a helical span at residues 331 to 351; sequence TILFMILYFFGMASSIWWVIL. Residues 352-373 lie on the Cytoplasmic side of the membrane; that stretch reads SLTWFLAAGMKWGHEAIEANSQ. A helical membrane pass occupies residues 374–394; sequence YFHLAAWAVPAVKTITILAMG. Topologically, residues 395-417 are extracellular; that stretch reads QVDGDVLSGVCYVGIYSVDSLRG. Residues 418 to 438 traverse the membrane as a helical segment; the sequence is FVLAPLFVYLFIGTSFLLAGF. Over 439 to 464 the chain is Cytoplasmic; the sequence is VSLFRIRTIMKHDGTKTEKLEKLMVR. The helical transmembrane segment at 465-485 threads the bilayer; it reads IGVFSVLYTVPATIVVACYFY. Residues 486-521 lie on the Extracellular side of the membrane; sequence EQAFRSTWEKTWLLQTCKTYAVPCPSHFAPMSPDFT. The chain crosses the membrane as a helical span at residues 522-542; that stretch reads VFMIKYLMTMIVGITTGFWIW. At 543–567 the chain is on the cytoplasmic side; it reads SGKTLQSWRRFYHRLSTGSKGETAV. A Lys-Thr-X-X-X-Trp motif, mediates interaction with the PDZ domain of Dvl family members motif is present at residues 545-550; that stretch reads KTLQSW. The PDZ-binding signature appears at 565–567; the sequence is TAV.

The protein belongs to the G-protein coupled receptor Fz/Smo family. In terms of tissue distribution, expressed broadly in cranial ectoderm. Also expressed in the developing somites and in other cranial placodes, including the olfactory, lens, otic placodes (lateral half of the vesicle) and epibranchial placodes. Low level of expression in all the mesoderm derivatives in the limb buds.

It is found in the cell membrane. The protein localises to the endosome membrane. Its function is as follows. Receptor for Wnt proteins. Most of frizzled receptors are coupled to the beta-catenin canonical signaling pathway, which leads to the activation of disheveled proteins, inhibition of GSK-3 kinase, nuclear accumulation of beta-catenin and activation of Wnt target genes. A second signaling pathway involving PKC and calcium fluxes has been seen for some family members, but it is not yet clear if it represents a distinct pathway or if it can be integrated in the canonical pathway, as PKC seems to be required for Wnt-mediated inactivation of GSK-3 kinase. Both pathways seem to involve interactions with G-proteins. May be involved in transduction and intercellular transmission of polarity information during tissue morphogenesis and/or in differentiated tissues. The chain is Frizzled-7 (FZD7) from Gallus gallus (Chicken).